A 437-amino-acid polypeptide reads, in one-letter code: Phosphomethylpyrimidine synthase (437 aa).

Residues N69, M98, Y127, H163, 185-187 (SRG), 226-229 (DACR), and E265 contribute to the substrate site. H269 is a Zn(2+) binding site. Y292 contributes to the substrate binding site. H333 serves as a coordination point for Zn(2+). The [4Fe-4S] cluster site is built by C409, C412, and C416.

Belongs to the ThiC family. It depends on [4Fe-4S] cluster as a cofactor.

It catalyses the reaction 5-amino-1-(5-phospho-beta-D-ribosyl)imidazole + S-adenosyl-L-methionine = 4-amino-2-methyl-5-(phosphooxymethyl)pyrimidine + CO + 5'-deoxyadenosine + formate + L-methionine + 3 H(+). It participates in cofactor biosynthesis; thiamine diphosphate biosynthesis. Functionally, catalyzes the synthesis of the hydroxymethylpyrimidine phosphate (HMP-P) moiety of thiamine from aminoimidazole ribotide (AIR) in a radical S-adenosyl-L-methionine (SAM)-dependent reaction. The chain is Phosphomethylpyrimidine synthase from Alkaliphilus metalliredigens (strain QYMF).